The primary structure comprises 87 residues: Small ribosomal subunit protein bS20 (87 aa).

Belongs to the bacterial ribosomal protein bS20 family.

Binds directly to 16S ribosomal RNA. In Nitrosomonas europaea (strain ATCC 19718 / CIP 103999 / KCTC 2705 / NBRC 14298), this protein is Small ribosomal subunit protein bS20.